Reading from the N-terminus, the 212-residue chain is Adenylate kinase (212 aa).

10–15 (GAGKGT) contributes to the ATP binding site. Residues 30–59 (STGDMFRAAMANQTEMGRLAKSYIDKGELV) form an NMP region. AMP is bound by residues Thr-31, Arg-36, 57–59 (ELV), 86–89 (GYPR), and Gln-93. Residues 127 to 159 (GRIINRKTGETFHKVFNPPVDYKEEDYYQREDD) form an LID region. ATP-binding positions include Arg-128 and 137–138 (TF). Residues Arg-156 and Arg-167 each contribute to the AMP site. Gln-195 is a binding site for ATP.

The protein belongs to the adenylate kinase family. In terms of assembly, monomer.

The protein resides in the cytoplasm. The enzyme catalyses AMP + ATP = 2 ADP. Its pathway is purine metabolism; AMP biosynthesis via salvage pathway; AMP from ADP: step 1/1. Its function is as follows. Catalyzes the reversible transfer of the terminal phosphate group between ATP and AMP. Plays an important role in cellular energy homeostasis and in adenine nucleotide metabolism. This Streptococcus pyogenes serotype M1 protein is Adenylate kinase.